Reading from the N-terminus, the 346-residue chain is 4-hydroxy-3-methylbut-2-enyl diphosphate reductase (346 aa).

[4Fe-4S] cluster is bound at residue Cys19. Positions 48 and 84 each coordinate (2E)-4-hydroxy-3-methylbut-2-enyl diphosphate. The dimethylallyl diphosphate site is built by His48 and His84. Positions 48 and 84 each coordinate isopentenyl diphosphate. [4Fe-4S] cluster is bound at residue Cys106. His134 is a binding site for (2E)-4-hydroxy-3-methylbut-2-enyl diphosphate. Position 134 (His134) interacts with dimethylallyl diphosphate. His134 is a binding site for isopentenyl diphosphate. The Proton donor role is filled by Glu136. Thr175 serves as a coordination point for (2E)-4-hydroxy-3-methylbut-2-enyl diphosphate. Cys205 serves as a coordination point for [4Fe-4S] cluster. Residues Ser233, Ser234, Asn235, and Ser278 each coordinate (2E)-4-hydroxy-3-methylbut-2-enyl diphosphate. Dimethylallyl diphosphate is bound by residues Ser233, Ser234, Asn235, and Ser278. Isopentenyl diphosphate-binding residues include Ser233, Ser234, Asn235, and Ser278.

The protein belongs to the IspH family. [4Fe-4S] cluster serves as cofactor.

The catalysed reaction is isopentenyl diphosphate + 2 oxidized [2Fe-2S]-[ferredoxin] + H2O = (2E)-4-hydroxy-3-methylbut-2-enyl diphosphate + 2 reduced [2Fe-2S]-[ferredoxin] + 2 H(+). It carries out the reaction dimethylallyl diphosphate + 2 oxidized [2Fe-2S]-[ferredoxin] + H2O = (2E)-4-hydroxy-3-methylbut-2-enyl diphosphate + 2 reduced [2Fe-2S]-[ferredoxin] + 2 H(+). It functions in the pathway isoprenoid biosynthesis; dimethylallyl diphosphate biosynthesis; dimethylallyl diphosphate from (2E)-4-hydroxy-3-methylbutenyl diphosphate: step 1/1. The protein operates within isoprenoid biosynthesis; isopentenyl diphosphate biosynthesis via DXP pathway; isopentenyl diphosphate from 1-deoxy-D-xylulose 5-phosphate: step 6/6. Functionally, catalyzes the conversion of 1-hydroxy-2-methyl-2-(E)-butenyl 4-diphosphate (HMBPP) into a mixture of isopentenyl diphosphate (IPP) and dimethylallyl diphosphate (DMAPP). Acts in the terminal step of the DOXP/MEP pathway for isoprenoid precursor biosynthesis. This chain is 4-hydroxy-3-methylbut-2-enyl diphosphate reductase, found in Brucella melitensis biotype 1 (strain ATCC 23456 / CCUG 17765 / NCTC 10094 / 16M).